Consider the following 381-residue polypeptide: 40-kDa huntingtin-associated protein (381 aa).

Alanine 2 bears the N-acetylalanine mark. The Nuclear localization signal signature appears at lysine 34–arginine 36. The interval glutamine 221–serine 265 is disordered. Pro residues predominate over residues proline 226–arginine 242.

Interacts with HTT (via C-terminus). Interacts with RAB5A. Found in a complex with F8A1/F8A2/F8A3, HTT and RAB5A; mediates the recruitment of HTT by RAB5A onto early endosomes. In terms of tissue distribution, produced abundantly in a wide variety of cell types.

It is found in the cytoplasm. The protein resides in the nucleus. It localises to the early endosome. Its subcellular location is the nuclear body. In terms of biological role, RAB5A effector molecule that is involved in vesicular trafficking of early endosomes. Mediates the recruitment of HTT by RAB5A onto early endosomes. The HTT-F8A1/F8A2/F8A3-RAB5A complex stimulates early endosomal interaction with actin filaments and inhibits interaction with microtubules, leading to the reduction of endosome motility. The chain is 40-kDa huntingtin-associated protein (F8a1) from Mus musculus (Mouse).